Here is a 156-residue protein sequence, read N- to C-terminus: Cyanate hydratase (156 aa).

Active-site residues include R96, E99, and S122.

The protein belongs to the cyanase family.

The catalysed reaction is cyanate + hydrogencarbonate + 3 H(+) = NH4(+) + 2 CO2. Its function is as follows. Catalyzes the reaction of cyanate with bicarbonate to produce ammonia and carbon dioxide. This Pseudomonas fluorescens (strain ATCC BAA-477 / NRRL B-23932 / Pf-5) protein is Cyanate hydratase.